We begin with the raw amino-acid sequence, 399 residues long: Glutathione S-transferase LANCL1 (399 aa).

Residue Ala2 is modified to N-acetylalanine. Lys142 carries the post-translational modification N6-acetyllysine. Zn(2+) is bound at residue Cys276. Lys317 contributes to the glutathione binding site. Zn(2+) is bound by residues Cys322 and His323. 364 to 367 (RTPD) serves as a coordination point for glutathione.

Belongs to the LanC-like protein family. In terms of assembly, interacts with the C-terminal of STOM. Interacts with the EPS8 SH3 domain. Interaction with EPS8 is inhibited by glutathione binding. Expressed in brain.

The protein localises to the cytoplasm. The protein resides in the cell membrane. The enzyme catalyses RX + glutathione = an S-substituted glutathione + a halide anion + H(+). It catalyses the reaction 1-chloro-2,4-dinitrobenzene + glutathione = 2,4-dinitrophenyl-S-glutathione + chloride + H(+). In terms of biological role, functions as a glutathione transferase. Catalyzes conjugation of the glutathione (GSH) to artificial substrates 1-chloro-2,4-dinitrobenzene (CDNB) and p-nitrophenyl acetate. Mitigates neuronal oxidative stress during normal postnatal development and in response to oxidative stresses probably through GSH antioxidant defense mechanism. May play a role in EPS8 signaling. Binds glutathione. The chain is Glutathione S-transferase LANCL1 (LANCL1) from Bos taurus (Bovine).